Consider the following 60-residue polypeptide: Large ribosomal subunit protein uL30 (60 aa).

It belongs to the universal ribosomal protein uL30 family. As to quaternary structure, part of the 50S ribosomal subunit.

The polypeptide is Large ribosomal subunit protein uL30 (Limosilactobacillus reuteri (strain DSM 20016) (Lactobacillus reuteri)).